We begin with the raw amino-acid sequence, 393 residues long: NAD(P)H-quinone oxidoreductase subunit H, chloroplastic (393 aa).

The protein belongs to the complex I 49 kDa subunit family. In terms of assembly, NDH is composed of at least 16 different subunits, 5 of which are encoded in the nucleus.

The protein localises to the plastid. The protein resides in the chloroplast thylakoid membrane. It carries out the reaction a plastoquinone + NADH + (n+1) H(+)(in) = a plastoquinol + NAD(+) + n H(+)(out). The catalysed reaction is a plastoquinone + NADPH + (n+1) H(+)(in) = a plastoquinol + NADP(+) + n H(+)(out). Its function is as follows. NDH shuttles electrons from NAD(P)H:plastoquinone, via FMN and iron-sulfur (Fe-S) centers, to quinones in the photosynthetic chain and possibly in a chloroplast respiratory chain. The immediate electron acceptor for the enzyme in this species is believed to be plastoquinone. Couples the redox reaction to proton translocation, and thus conserves the redox energy in a proton gradient. The sequence is that of NAD(P)H-quinone oxidoreductase subunit H, chloroplastic from Nasturtium officinale (Watercress).